A 264-amino-acid chain; its full sequence is Thiazole synthase (264 aa).

The Schiff-base intermediate with DXP role is filled by K106. Residues G167, A193 to G194, and N215 to S216 contribute to the 1-deoxy-D-xylulose 5-phosphate site.

This sequence belongs to the ThiG family. Homotetramer. Forms heterodimers with either ThiH or ThiS.

Its subcellular location is the cytoplasm. It catalyses the reaction [ThiS sulfur-carrier protein]-C-terminal-Gly-aminoethanethioate + 2-iminoacetate + 1-deoxy-D-xylulose 5-phosphate = [ThiS sulfur-carrier protein]-C-terminal Gly-Gly + 2-[(2R,5Z)-2-carboxy-4-methylthiazol-5(2H)-ylidene]ethyl phosphate + 2 H2O + H(+). The protein operates within cofactor biosynthesis; thiamine diphosphate biosynthesis. In terms of biological role, catalyzes the rearrangement of 1-deoxy-D-xylulose 5-phosphate (DXP) to produce the thiazole phosphate moiety of thiamine. Sulfur is provided by the thiocarboxylate moiety of the carrier protein ThiS. In vitro, sulfur can be provided by H(2)S. The polypeptide is Thiazole synthase (Stutzerimonas stutzeri (strain A1501) (Pseudomonas stutzeri)).